The primary structure comprises 231 residues: MRIAVIGAMEEEVRILRDKLEQAETETVAGCEFTKGQLAGHEVILLKSGIGKVNAAMSTTILLERYKPEKVINTGSAGGFHHSLNVGDVVISTEVRHHDVDVTAFNYEYGQVPGMPPGFKADEALVALAEKCMQAEENIQVVKGMIATGDSFMSDPNRVAAIRDKFENLYAVEMEAAAVAQVCHQYEVPFVIIRALSDIAGKESNVSFDQFLDQAALHSTNFIVKVLEELK.

The Proton acceptor role is filled by Glu12. Residues Gly78, Met153, and 174-175 (ME) each bind substrate. Asp198 serves as the catalytic Proton donor.

The protein belongs to the PNP/UDP phosphorylase family. MtnN subfamily.

It carries out the reaction S-adenosyl-L-homocysteine + H2O = S-(5-deoxy-D-ribos-5-yl)-L-homocysteine + adenine. It catalyses the reaction S-methyl-5'-thioadenosine + H2O = 5-(methylsulfanyl)-D-ribose + adenine. The enzyme catalyses 5'-deoxyadenosine + H2O = 5-deoxy-D-ribose + adenine. Its pathway is amino-acid biosynthesis; L-methionine biosynthesis via salvage pathway; S-methyl-5-thio-alpha-D-ribose 1-phosphate from S-methyl-5'-thioadenosine (hydrolase route): step 1/2. Its function is as follows. Catalyzes the irreversible cleavage of the glycosidic bond in both 5'-methylthioadenosine (MTA) and S-adenosylhomocysteine (SAH/AdoHcy) to adenine and the corresponding thioribose, 5'-methylthioribose and S-ribosylhomocysteine, respectively. Also cleaves 5'-deoxyadenosine, a toxic by-product of radical S-adenosylmethionine (SAM) enzymes, into 5-deoxyribose and adenine. The chain is 5'-methylthioadenosine/S-adenosylhomocysteine nucleosidase from Bacillus anthracis (strain A0248).